Here is a 468-residue protein sequence, read N- to C-terminus: Adenylyltransferase and sulfurtransferase MOCS3-1 (468 aa).

ATP is bound by residues G111, D132, 139 to 143 (NNLHR), K156, and 200 to 201 (DN). C241 and C244 together coordinate Zn(2+). The Glycyl thioester intermediate; for adenylyltransferase activity role is filled by C258. Zn(2+)-binding residues include C316 and C319. In terms of domain architecture, Rhodanese spans 371–466 (DGEPHLLLDV…WGRDVDPDFP (96 aa)). Residue C426 is the Cysteine persulfide intermediate; for sulfurtransferase activity of the active site.

The protein in the N-terminal section; belongs to the HesA/MoeB/ThiF family. UBA4 subfamily. Zn(2+) is required as a cofactor.

Its subcellular location is the cytoplasm. It catalyses the reaction [molybdopterin-synthase sulfur-carrier protein]-C-terminal Gly-Gly + ATP + H(+) = [molybdopterin-synthase sulfur-carrier protein]-C-terminal Gly-Gly-AMP + diphosphate. It carries out the reaction [molybdopterin-synthase sulfur-carrier protein]-C-terminal Gly-Gly-AMP + S-sulfanyl-L-cysteinyl-[cysteine desulfurase] + AH2 = [molybdopterin-synthase sulfur-carrier protein]-C-terminal-Gly-aminoethanethioate + L-cysteinyl-[cysteine desulfurase] + A + AMP + 2 H(+). It participates in tRNA modification; 5-methoxycarbonylmethyl-2-thiouridine-tRNA biosynthesis. The protein operates within cofactor biosynthesis; molybdopterin biosynthesis. In terms of biological role, plays a central role in 2-thiolation of mcm(5)S(2)U at tRNA wobble positions of cytosolic tRNA(Lys), tRNA(Glu) and tRNA(Gln). Also essential during biosynthesis of the molybdenum cofactor. Acts by mediating the C-terminal thiocarboxylation of sulfur carriers URM1 and MOCS2A. Its N-terminus first activates URM1 and MOCS2A as acyl-adenylates (-COAMP), then the persulfide sulfur on the catalytic cysteine is transferred to URM1 and MOCS2A to form thiocarboxylation (-COSH) of their C-terminus. The reaction probably involves hydrogen sulfide that is generated from the persulfide intermediate and that acts as a nucleophile towards URM1 and MOCS2A. Subsequently, a transient disulfide bond is formed. Does not use thiosulfate as sulfur donor; NFS1 probably acting as a sulfur donor for thiocarboxylation reactions. This is Adenylyltransferase and sulfurtransferase MOCS3-1 from Zea mays (Maize).